Reading from the N-terminus, the 318-residue chain is HPr kinase/phosphorylase (318 aa).

Active-site residues include histidine 146 and lysine 167. 161–168 (GESGLGKS) lines the ATP pocket. Serine 168 is a Mg(2+) binding site. The active-site Proton acceptor; for phosphorylation activity. Proton donor; for dephosphorylation activity is the aspartate 185. Positions 209–218 (LEVRGIGLLD) are important for the catalytic mechanism of both phosphorylation and dephosphorylation. Glutamate 210 is a Mg(2+) binding site. Residue arginine 252 is part of the active site. Residues 273-278 (QVVAGR) form an important for the catalytic mechanism of dephosphorylation region.

It belongs to the HPrK/P family. Homohexamer. Requires Mg(2+) as cofactor.

The enzyme catalyses [HPr protein]-L-serine + ATP = [HPr protein]-O-phospho-L-serine + ADP + H(+). It catalyses the reaction [HPr protein]-O-phospho-L-serine + phosphate + H(+) = [HPr protein]-L-serine + diphosphate. Functionally, catalyzes the ATP- as well as the pyrophosphate-dependent phosphorylation of a specific serine residue in HPr, a phosphocarrier protein of the phosphoenolpyruvate-dependent sugar phosphotransferase system (PTS). HprK/P also catalyzes the pyrophosphate-producing, inorganic phosphate-dependent dephosphorylation (phosphorolysis) of seryl-phosphorylated HPr (P-Ser-HPr). This Verminephrobacter eiseniae (strain EF01-2) protein is HPr kinase/phosphorylase.